The primary structure comprises 229 residues: Ribose-5-phosphate isomerase A (229 aa).

Residues 28–31 (TGST), 85–88 (DGAD), and 98–101 (KGRG) each bind substrate. Residue E107 is the Proton acceptor of the active site. K125 provides a ligand contact to substrate.

The protein belongs to the ribose 5-phosphate isomerase family. In terms of assembly, homodimer.

It carries out the reaction aldehydo-D-ribose 5-phosphate = D-ribulose 5-phosphate. It participates in carbohydrate degradation; pentose phosphate pathway; D-ribose 5-phosphate from D-ribulose 5-phosphate (non-oxidative stage): step 1/1. In terms of biological role, catalyzes the reversible conversion of ribose-5-phosphate to ribulose 5-phosphate. The polypeptide is Ribose-5-phosphate isomerase A (Pyrococcus furiosus (strain ATCC 43587 / DSM 3638 / JCM 8422 / Vc1)).